A 76-amino-acid polypeptide reads, in one-letter code: Protein krueppel (76 aa).

2 C2H2-type zinc fingers span residues 11–33 (FECS…LRLH) and 39–61 (YSCP…LRVH).

The protein belongs to the krueppel C2H2-type zinc-finger protein family.

The protein resides in the nucleus. Krueppel is a gap class segmentation protein. In Manduca sexta (Tobacco hawkmoth), this protein is Protein krueppel (Kr).